Here is a 236-residue protein sequence, read N- to C-terminus: Ubiquinone biosynthesis O-methyltransferase (236 aa).

S-adenosyl-L-methionine-binding residues include R39, G59, D80, and M124.

It belongs to the methyltransferase superfamily. UbiG/COQ3 family.

It carries out the reaction a 3-demethylubiquinol + S-adenosyl-L-methionine = a ubiquinol + S-adenosyl-L-homocysteine + H(+). The catalysed reaction is a 3-(all-trans-polyprenyl)benzene-1,2-diol + S-adenosyl-L-methionine = a 2-methoxy-6-(all-trans-polyprenyl)phenol + S-adenosyl-L-homocysteine + H(+). Its pathway is cofactor biosynthesis; ubiquinone biosynthesis. O-methyltransferase that catalyzes the 2 O-methylation steps in the ubiquinone biosynthetic pathway. This is Ubiquinone biosynthesis O-methyltransferase from Shewanella baltica (strain OS223).